Here is a 302-residue protein sequence, read N- to C-terminus: Large ribosomal subunit protein uL4m (302 aa).

This sequence belongs to the universal ribosomal protein uL4 family. In terms of assembly, component of the mitochondrial ribosome large subunit (39S) which comprises a 16S rRNA and about 50 distinct proteins.

The protein resides in the mitochondrion. The sequence is that of Large ribosomal subunit protein uL4m (mrpl4) from Danio rerio (Zebrafish).